Reading from the N-terminus, the 233-residue chain is Large ribosomal subunit protein uL1 (233 aa).

Belongs to the universal ribosomal protein uL1 family. As to quaternary structure, part of the 50S ribosomal subunit.

Its function is as follows. Binds directly to 23S rRNA. The L1 stalk is quite mobile in the ribosome, and is involved in E site tRNA release. Protein L1 is also a translational repressor protein, it controls the translation of the L11 operon by binding to its mRNA. The chain is Large ribosomal subunit protein uL1 from Geobacillus kaustophilus (strain HTA426).